We begin with the raw amino-acid sequence, 364 residues long: Coproporphyrin III ferrochelatase (364 aa).

2 residues coordinate Fe-coproporphyrin III: R29 and Y118. Fe(2+) is bound by residues H169 and E250.

It belongs to the ferrochelatase family.

The protein resides in the cytoplasm. It carries out the reaction Fe-coproporphyrin III + 2 H(+) = coproporphyrin III + Fe(2+). It participates in porphyrin-containing compound metabolism; protoheme biosynthesis. Functionally, involved in coproporphyrin-dependent heme b biosynthesis. Catalyzes the insertion of ferrous iron into coproporphyrin III to form Fe-coproporphyrin III. This chain is Coproporphyrin III ferrochelatase, found in Streptococcus pneumoniae (strain ATCC 700669 / Spain 23F-1).